We begin with the raw amino-acid sequence, 128 residues long: Sulfurtransferase TusD (128 aa).

The active-site Cysteine persulfide intermediate is Cys78.

This sequence belongs to the DsrE/TusD family. Heterohexamer, formed by a dimer of trimers. The hexameric TusBCD complex contains 2 copies each of TusB, TusC and TusD. The TusBCD complex interacts with TusE.

It is found in the cytoplasm. In terms of biological role, part of a sulfur-relay system required for 2-thiolation of 5-methylaminomethyl-2-thiouridine (mnm(5)s(2)U) at tRNA wobble positions. Accepts sulfur from TusA and transfers it in turn to TusE. The protein is Sulfurtransferase TusD of Escherichia coli (strain 55989 / EAEC).